Reading from the N-terminus, the 353-residue chain is Photosystem II D2 protein (353 aa).

Thr-2 carries the N-acetylthreonine modification. At Thr-2 the chain carries Phosphothreonine. A helical membrane pass occupies residues 41–61 (CAYFALGGWFTGTTFVTSWYT). Residue His-118 participates in chlorophyll a binding. A helical transmembrane segment spans residues 125 to 141 (GFMLRQFELSRSVQLRP). Pheophytin a-binding residues include Gln-130 and Asn-143. The helical transmembrane segment at 153–166 (VFVSVFLIYPLGQS) threads the bilayer. His-198 is a chlorophyll a binding site. Residues 208–228 (AALLCAIHGATVENTLFEDGD) form a helical membrane-spanning segment. A plastoquinone contacts are provided by His-215 and Phe-262. His-215 provides a ligand contact to Fe cation. His-269 is a Fe cation binding site. Residues 279 to 295 (GLWMSALGVVGLALNLR) traverse the membrane as a helical segment.

The protein belongs to the reaction center PufL/M/PsbA/D family. In terms of assembly, PSII is composed of 1 copy each of membrane proteins PsbA, PsbB, PsbC, PsbD, PsbE, PsbF, PsbH, PsbI, PsbJ, PsbK, PsbL, PsbM, PsbT, PsbX, PsbY, PsbZ, Psb30/Ycf12, at least 3 peripheral proteins of the oxygen-evolving complex and a large number of cofactors. It forms dimeric complexes. The D1/D2 heterodimer binds P680, chlorophylls that are the primary electron donor of PSII, and subsequent electron acceptors. It shares a non-heme iron and each subunit binds pheophytin, quinone, additional chlorophylls, carotenoids and lipids. There is also a Cl(-1) ion associated with D1 and D2, which is required for oxygen evolution. The PSII complex binds additional chlorophylls, carotenoids and specific lipids. serves as cofactor.

It localises to the plastid. Its subcellular location is the chloroplast thylakoid membrane. The enzyme catalyses 2 a plastoquinone + 4 hnu + 2 H2O = 2 a plastoquinol + O2. In terms of biological role, photosystem II (PSII) is a light-driven water:plastoquinone oxidoreductase that uses light energy to abstract electrons from H(2)O, generating O(2) and a proton gradient subsequently used for ATP formation. It consists of a core antenna complex that captures photons, and an electron transfer chain that converts photonic excitation into a charge separation. The D1/D2 (PsbA/PsbD) reaction center heterodimer binds P680, the primary electron donor of PSII as well as several subsequent electron acceptors. D2 is needed for assembly of a stable PSII complex. In Arabis hirsuta (Hairy rock-cress), this protein is Photosystem II D2 protein.